A 678-amino-acid chain; its full sequence is Glycine--tRNA ligase beta subunit (678 aa).

Belongs to the class-II aminoacyl-tRNA synthetase family. As to quaternary structure, tetramer of two alpha and two beta subunits.

It localises to the cytoplasm. The enzyme catalyses tRNA(Gly) + glycine + ATP = glycyl-tRNA(Gly) + AMP + diphosphate. This Streptococcus pneumoniae (strain ATCC 700669 / Spain 23F-1) protein is Glycine--tRNA ligase beta subunit.